A 509-amino-acid chain; its full sequence is Photosystem II CP47 reaction center protein (509 aa).

6 consecutive transmembrane segments (helical) span residues 21–36 (AVHM…WAGS), 101–115 (IVFS…IWHW), 140–156 (GIHL…FGAF), 203–218 (IAAG…FHLS), 237–253 (VLSS…AFVV), and 458–473 (SFAL…HGSR).

This sequence belongs to the PsbB/PsbC family. PsbB subfamily. As to quaternary structure, PSII is composed of 1 copy each of membrane proteins PsbA, PsbB, PsbC, PsbD, PsbE, PsbF, PsbH, PsbI, PsbJ, PsbK, PsbL, PsbM, PsbT, PsbX, PsbY, PsbZ, Psb30/Ycf12, at least 3 peripheral proteins of the oxygen-evolving complex and a large number of cofactors. It forms dimeric complexes. Requires Binds multiple chlorophylls. PSII binds additional chlorophylls, carotenoids and specific lipids. as cofactor.

Its subcellular location is the plastid. The protein resides in the chloroplast thylakoid membrane. Functionally, one of the components of the core complex of photosystem II (PSII). It binds chlorophyll and helps catalyze the primary light-induced photochemical processes of PSII. PSII is a light-driven water:plastoquinone oxidoreductase, using light energy to abstract electrons from H(2)O, generating O(2) and a proton gradient subsequently used for ATP formation. This is Photosystem II CP47 reaction center protein from Populus deltoides (Eastern poplar).